Here is a 622-residue protein sequence, read N- to C-terminus: Chaperone protein HscA homolog (622 aa).

This sequence belongs to the heat shock protein 70 family.

In terms of biological role, chaperone involved in the maturation of iron-sulfur cluster-containing proteins. Has a low intrinsic ATPase activity which is markedly stimulated by HscB. The polypeptide is Chaperone protein HscA homolog (Pseudoalteromonas atlantica (strain T6c / ATCC BAA-1087)).